Consider the following 86-residue polypeptide: UPF0291 protein LBA1279 (86 aa).

2 stretches are compositionally biased toward basic and acidic residues: residues 1-27 and 65-75; these read MNKD…KENE and NGKEVTSEKAK. 2 disordered regions span residues 1 to 36 and 65 to 86; these read MNKD…EEEE and NGKE…LRKD. Residues 76-86 show a composition bias toward basic residues; it reads QAQRKKGLRKD.

Belongs to the UPF0291 family.

Its subcellular location is the cytoplasm. This chain is UPF0291 protein LBA1279, found in Lactobacillus acidophilus (strain ATCC 700396 / NCK56 / N2 / NCFM).